A 196-amino-acid polypeptide reads, in one-letter code: Protease (196 aa).

Residues His-54, Asp-70, and Cys-121 contribute to the active site.

Belongs to the peptidase C5 family. As to quaternary structure, interacts with protease cofactor pVI-C; this interaction is necessary for protease activation.

It is found in the virion. The protein resides in the host nucleus. The enzyme catalyses Cleaves proteins of the adenovirus and its host cell at two consensus sites: -Yaa-Xaa-Gly-Gly-|-Xaa- and -Yaa-Xaa-Gly-Xaa-|-Gly- (in which Yaa is Met, Ile or Leu, and Xaa is any amino acid).. Its activity is regulated as follows. Requires DNA and protease cofactor for maximal activation. Inside nascent virions, becomes partially activated by binding to the viral DNA, allowing it to cleave the cofactor that binds to the protease and fully activates it. Actin, like the viral protease cofactor, seems to act as a cofactor in the cleavage of cytokeratin 18 and of actin itself. Its function is as follows. Cleaves viral precursor proteins (pTP, pIIIa, pVI, pVII, pVIII, and pX) inside newly assembled particles giving rise to mature virions. Protease complexed to its cofactor slides along the viral DNA to specifically locate and cleave the viral precursors. Mature virions have a weakened organization compared to the unmature virions, thereby facilitating subsequent uncoating. Without maturation, the particle lacks infectivity and is unable to uncoat. Late in adenovirus infection, in the cytoplasm, may participate in the cytoskeleton destruction. Cleaves host cell cytoskeletal keratins K7 and K18. The protein is Protease of Bos taurus (Bovine).